A 364-amino-acid chain; its full sequence is MLIRRLALHQLRRFSAVDLSPQPGLNLLTGDNGAGKTSVLEALHLMAYGRSFRGRVRDGLVRQGQEALEIFVEWDEQRADHPPHRRKAGLRHSGQDWKGRLDGEDVAQLGNLCAALAVVTFEPGSHALVSGGGEPRRRFLDWGLFHVEPDFLSLWRRYSRALKQRNALLKQGGPSRMLDTWDHELAEAGEPLTSRRQHYLERLQQRTVALAASLAPQLGIQGLELSPGWRRHELPLADALLLARERDRQAGYTSVGPHRADWSVDFHSIPGRDALSRGQAKLTALACLLAQAEDYAEQRGEWPVIALDDLASELDRTHQARVLERLLNGPAQIFITATETPAALLDLTHIARFHVEHAQIVAVP.

An ATP-binding site is contributed by 30–37 (GDNGAGKT).

It belongs to the RecF family.

The protein localises to the cytoplasm. The RecF protein is involved in DNA metabolism; it is required for DNA replication and normal SOS inducibility. RecF binds preferentially to single-stranded, linear DNA. It also seems to bind ATP. This is DNA replication and repair protein RecF from Stenotrophomonas maltophilia (strain K279a).